Reading from the N-terminus, the 309-residue chain is Probable lipid kinase YegS-like (309 aa).

Positions 1–134 (MAPSHWRVIL…VDLLRIDADH (134 aa)) constitute a DAGKc domain. ATP-binding positions include Thr-39, 65–71 (GDGTLSE), and Thr-96. Mg(2+) is bound by residues Leu-219, Asp-222, and Leu-224. Glu-280 serves as the catalytic Proton acceptor.

The protein belongs to the diacylglycerol/lipid kinase family. YegS lipid kinase subfamily. Mg(2+) serves as cofactor. Ca(2+) is required as a cofactor.

The protein resides in the cytoplasm. In terms of biological role, probably phosphorylates lipids; the in vivo substrate is unknown. This chain is Probable lipid kinase YegS-like, found in Xanthomonas euvesicatoria pv. vesicatoria (strain 85-10) (Xanthomonas campestris pv. vesicatoria).